A 298-amino-acid polypeptide reads, in one-letter code: MPHDNIPFPVTFAAGAVAGISEVLTLYPLDVVKTRMQLSVGKSDYNGTFDCLKKIVKNEGPHRLYRGILPPILMEAPKRALKFASNDTYSKLWRKVFKRKDSSPALSILTGSCAGFTETFVVVPFELMKIRLQDVKNASKYNGTVDCFTKIVKQERILALYNGFEATMWRHVVWNAGYFGVIQKIRNSLTPASSRIGEIRNNLIAGTIGGIFGTFLSTPFDVIKSRIQTVPRIAGQVPKYNWAYPALVTVAREEGFTALYKGFVPKVLRLGPGGGILLVVFNSVIEFYKRCLVHNASA.

Helical transmembrane passes span 6-26 (IPFP…VLTL), 62-81 (HRLY…KRAL), 105-125 (ALSI…VVPF), 159-179 (ALYN…AGYF), 203-223 (LIAG…FDVI), and 267-287 (VLRL…VIEF). 3 Solcar repeats span residues 6–92 (IPFP…YSKL), 102–188 (SSPA…IRNS), and 197–287 (GEIR…VIEF).

The protein belongs to the mitochondrial carrier (TC 2.A.29) family.

It localises to the mitochondrion inner membrane. Transports C5-C7 oxodicarboxylates across the inner membranes of mitochondria. In Schizosaccharomyces pombe (strain 972 / ATCC 24843) (Fission yeast), this protein is Probable mitochondrial 2-oxodicarboxylate carrier.